The chain runs to 385 residues: Queuine tRNA-ribosyltransferase (385 aa).

D92 (proton acceptor) is an active-site residue. Substrate contacts are provided by residues 92-96 (DSGGF), D146, Q188, and G215. Residues 246-252 (GVGHPED) form an RNA binding region. Residue D265 is the Nucleophile of the active site. Residues 270–274 (TRTGR) form an RNA binding; important for wobble base 34 recognition region. Residues C303, C305, C308, and H334 each contribute to the Zn(2+) site.

The protein belongs to the queuine tRNA-ribosyltransferase family. As to quaternary structure, homodimer. Within each dimer, one monomer is responsible for RNA recognition and catalysis, while the other monomer binds to the replacement base PreQ1. Requires Zn(2+) as cofactor.

The enzyme catalyses 7-aminomethyl-7-carbaguanine + guanosine(34) in tRNA = 7-aminomethyl-7-carbaguanosine(34) in tRNA + guanine. The protein operates within tRNA modification; tRNA-queuosine biosynthesis. Its function is as follows. Catalyzes the base-exchange of a guanine (G) residue with the queuine precursor 7-aminomethyl-7-deazaguanine (PreQ1) at position 34 (anticodon wobble position) in tRNAs with GU(N) anticodons (tRNA-Asp, -Asn, -His and -Tyr). Catalysis occurs through a double-displacement mechanism. The nucleophile active site attacks the C1' of nucleotide 34 to detach the guanine base from the RNA, forming a covalent enzyme-RNA intermediate. The proton acceptor active site deprotonates the incoming PreQ1, allowing a nucleophilic attack on the C1' of the ribose to form the product. After dissociation, two additional enzymatic reactions on the tRNA convert PreQ1 to queuine (Q), resulting in the hypermodified nucleoside queuosine (7-(((4,5-cis-dihydroxy-2-cyclopenten-1-yl)amino)methyl)-7-deazaguanosine). The chain is Queuine tRNA-ribosyltransferase from Thermus thermophilus (strain ATCC BAA-163 / DSM 7039 / HB27).